The following is an 88-amino-acid chain: Apolipoprotein C-I (88 aa).

An N-terminal signal peptide occupies residues 1-26 (MRLILSLPVLAVVLAMVLEGPAPAQA).

Belongs to the apolipoprotein C1 family.

It localises to the secreted. Functionally, inhibitor of lipoprotein binding to the low density lipoprotein (LDL) receptor, LDL receptor-related protein, and very low density lipoprotein (VLDL) receptor. Associates with high density lipoproteins (HDL) and the triacylglycerol-rich lipoproteins in the plasma and makes up about 10% of the protein of the VLDL and 2% of that of HDL. Appears to interfere directly with fatty acid uptake and is also the major plasma inhibitor of cholesteryl ester transfer protein (CETP). Binds free fatty acids and reduces their intracellular esterification. Modulates the interaction of APOE with beta-migrating VLDL and inhibits binding of beta-VLDL to the LDL receptor-related protein. This is Apolipoprotein C-I (APOC1) from Eidolon helvum (Straw-colored fruit bat).